A 278-amino-acid polypeptide reads, in one-letter code: Alpha-tocopherol transfer protein (278 aa).

The region spanning 88–253 (RPRSILGLLK…EYGGKEFSME (166 aa)) is the CRAL-TRIO domain. An a 1,2-diacyl-sn-glycero-3-phospho-(1D-myo-inositol-3,4-bisphosphate)-binding site is contributed by Asp-185. Phe-187 serves as a coordination point for (+)-alpha-tocopherol. An a 1,2-diacyl-sn-glycero-3-phospho-(1D-myo-inositol-3,4-bisphosphate)-binding site is contributed by 190–192 (KVR). 208 to 211 (SMIK) contributes to the a 1,2-diacyl-sn-glycero-3-phospho-(1D-myo-inositol-4,5-bisphosphate) binding site. The a 1,2-diacyl-sn-glycero-3-phospho-(1D-myo-inositol-3,4-bisphosphate) site is built by Lys-217 and Arg-221.

Monomer and homotetramer. Phosphatidylinositol 4,5-bisphosphate binding induces the formation of homotetramers. Phosphatidylinositol 3,4-bisphosphate is less efficient in inducing tetramerization.

It localises to the cytoplasm. Binds (+)-alpha-tocopherol, enhances its transfer between separate membranes, and stimulates its release from liver cells. Binds both phosphatidylinositol 3,4-bisphosphate and phosphatidylinositol 4,5-bisphosphate; the resulting conformation change is important for the release of the bound alpha-tocopherol. In Mus musculus (Mouse), this protein is Alpha-tocopherol transfer protein (Ttpa).